Here is an 860-residue protein sequence, read N- to C-terminus: Ribosome-releasing factor 2, mitochondrial (860 aa).

A tr-type G domain is found at 45–337 (DRTRNIGIIA…AVVNFLPSPL (293 aa)). GTP contacts are provided by residues 54–61 (AHIDAGKT), 118–122 (DTPGH), and 172–175 (NKMD).

The protein belongs to the TRAFAC class translation factor GTPase superfamily. Classic translation factor GTPase family. EF-G/EF-2 subfamily.

It is found in the mitochondrion. Mitochondrial GTPase that mediates the disassembly of ribosomes from messenger RNA at the termination of mitochondrial protein biosynthesis. Not involved in the GTP-dependent ribosomal translocation step during translation elongation. This chain is Ribosome-releasing factor 2, mitochondrial, found in Debaryomyces hansenii (strain ATCC 36239 / CBS 767 / BCRC 21394 / JCM 1990 / NBRC 0083 / IGC 2968) (Yeast).